Reading from the N-terminus, the 387-residue chain is Succinate--CoA ligase [ADP-forming] subunit beta (387 aa).

In terms of domain architecture, ATP-grasp spans 9-236 (RDLFESYGVP…AAAADPLEAK (228 aa)). ATP contacts are provided by residues Lys45, 52–54 (GRG), Ala94, and Glu99. 2 residues coordinate Mg(2+): Asn191 and Asp205. Substrate contacts are provided by residues Asn256 and 318 to 320 (GIT).

Belongs to the succinate/malate CoA ligase beta subunit family. As to quaternary structure, heterotetramer of two alpha and two beta subunits. It depends on Mg(2+) as a cofactor.

The catalysed reaction is succinate + ATP + CoA = succinyl-CoA + ADP + phosphate. It catalyses the reaction GTP + succinate + CoA = succinyl-CoA + GDP + phosphate. Its pathway is carbohydrate metabolism; tricarboxylic acid cycle; succinate from succinyl-CoA (ligase route): step 1/1. Its function is as follows. Succinyl-CoA synthetase functions in the citric acid cycle (TCA), coupling the hydrolysis of succinyl-CoA to the synthesis of either ATP or GTP and thus represents the only step of substrate-level phosphorylation in the TCA. The beta subunit provides nucleotide specificity of the enzyme and binds the substrate succinate, while the binding sites for coenzyme A and phosphate are found in the alpha subunit. This is Succinate--CoA ligase [ADP-forming] subunit beta from Clavibacter michiganensis subsp. michiganensis (strain NCPPB 382).